The sequence spans 115 residues: U3-lycotoxin-Ls1u (115 aa).

A signal peptide spans Met1–Ala20. A propeptide spanning residues Glu21–Arg44 is cleaved from the precursor. 3 cysteine pairs are disulfide-bonded: Cys48–Cys63, Cys55–Cys72, and Cys62–Cys87.

Belongs to the neurotoxin 19 (CSTX) family. 01 subfamily. In terms of tissue distribution, expressed by the venom gland.

The protein resides in the secreted. The sequence is that of U3-lycotoxin-Ls1u from Lycosa singoriensis (Wolf spider).